Here is a 253-residue protein sequence, read N- to C-terminus: 5'-nucleotidase SurE (253 aa).

A divalent metal cation-binding residues include D8, D9, S39, and N95.

Belongs to the SurE nucleotidase family. Requires a divalent metal cation as cofactor.

It localises to the cytoplasm. The catalysed reaction is a ribonucleoside 5'-phosphate + H2O = a ribonucleoside + phosphate. In terms of biological role, nucleotidase that shows phosphatase activity on nucleoside 5'-monophosphates. The chain is 5'-nucleotidase SurE from Kosmotoga olearia (strain ATCC BAA-1733 / DSM 21960 / TBF 19.5.1).